A 160-amino-acid polypeptide reads, in one-letter code: uncharacterized protein (160 aa).

The protein belongs to the Dps family.

This is an uncharacterized protein from Haemophilus influenzae (strain ATCC 51907 / DSM 11121 / KW20 / Rd).